A 666-amino-acid polypeptide reads, in one-letter code: Probable potassium transport system protein Kup (666 aa).

12 helical membrane-spanning segments follow: residues 16–36, 58–78, 100–120, 141–161, 165–185, 221–241, 253–273, 292–312, 343–363, 373–393, 399–419, and 424–444; these read GFII…LYTM, ISLI…LIAL, PWLI…GALT, IYQN…VLFG, FGTG…FSFL, IFIL…YSDL, WPFV…WILA, LTVY…QALI, LYIP…VLYF, YGLA…YYLI, PFLA…FFWA, and FMHG…VMFI.

It belongs to the HAK/KUP transporter (TC 2.A.72) family.

It is found in the cell membrane. It carries out the reaction K(+)(in) + H(+)(in) = K(+)(out) + H(+)(out). Transport of potassium into the cell. Likely operates as a K(+):H(+) symporter. The chain is Probable potassium transport system protein Kup from Streptococcus pyogenes serotype M18 (strain MGAS8232).